The chain runs to 346 residues: Calcium uniporter protein, mitochondrial (346 aa).

At 1–195 (MTKGKLLTTP…ECDKAAHRGA (195 aa)) the chain is on the mitochondrial matrix side. Residues 55–120 (ELPPPDPQDS…GEGKDEGEFV (66 aa)) are disordered. Composition is skewed to basic and acidic residues over residues 76–91 (MEAK…KADT) and 109–119 (REGEGKDEGEF). A helical transmembrane segment spans residues 196-216 (QRIALAGCGGLIGYWYIVYRL). Over 217-226 (TFETDLGWDV) the chain is Mitochondrial intermembrane. Positions 224–232 (WDVMEPVTY) match the Selectivity filter motif. A helical transmembrane segment spans residues 227–248 (MEPVTYLVGLSTLIGGYMWFLW). Glu228 is a binding site for Ca(2+). Topologically, residues 249–346 (HNREVSYRSA…KEGEEDDEDD (98 aa)) are mitochondrial matrix. The segment at 306–346 (WNETQDEGGDEKVTKALRDERKNNNGTKNKSKEGEEDDEDD) is disordered. The segment covering 315-328 (DEKVTKALRDERKN) has biased composition (basic and acidic residues).

Belongs to the MCU (TC 1.A.77) family. Homotetramer, assembles in a dimer or dimers configuration with two interfaces.

The protein localises to the mitochondrion inner membrane. The enzyme catalyses Ca(2+)(in) = Ca(2+)(out). Functionally, highly selective calcium channel localized to the inner mitochondrial membrane, which mediates calcium uptake into the mitochondrial matrix. Mitochondrial calcium homeostasis plays key roles in cellular physiology and regulates ATP production, cytoplasmic calcium signals and activation of cell death pathways. Sufficient to operate as a pore-forming channel without the need of calcium-sensor or auxiliary subunit. The polypeptide is Calcium uniporter protein, mitochondrial (Cyphellophora europaea (strain CBS 101466) (Phialophora europaea)).